Consider the following 355-residue polypeptide: Zinc finger protein CONSTANS-LIKE 5 (355 aa).

The Zn(2+) site is built by C22, C25, C45, H50, C61, C64, C84, and H89. The segment at 22–60 adopts a B box-type 1; atypical zinc-finger fold; the sequence is CDACKSVTAAVFCRVDSAFLCIACDTRIHSFTRHERVWV. The B box-type 2; atypical zinc-finger motif lies at 61 to 103; the sequence is CEVCEQAPAAVTCKADAAALCVSCDADIHSANPLASRHERVPV. Residues 285–327 form the CCT domain; the sequence is REARVLRYREKRKNRKFEKTIRYASRKAYAESRPRIKGRFAKR.

It belongs to the CONSTANS family.

Its subcellular location is the nucleus. This chain is Zinc finger protein CONSTANS-LIKE 5 (COL5), found in Arabidopsis thaliana (Mouse-ear cress).